A 642-amino-acid chain; its full sequence is Threonine--tRNA ligase (642 aa).

In terms of domain architecture, TGS spans methionine 1 to threonine 61. Residues aspartate 243–proline 534 are catalytic. Zn(2+)-binding residues include cysteine 334, histidine 385, and histidine 511.

Belongs to the class-II aminoacyl-tRNA synthetase family. Homodimer. Zn(2+) is required as a cofactor.

It is found in the cytoplasm. It catalyses the reaction tRNA(Thr) + L-threonine + ATP = L-threonyl-tRNA(Thr) + AMP + diphosphate + H(+). Functionally, catalyzes the attachment of threonine to tRNA(Thr) in a two-step reaction: L-threonine is first activated by ATP to form Thr-AMP and then transferred to the acceptor end of tRNA(Thr). Also edits incorrectly charged L-seryl-tRNA(Thr). The polypeptide is Threonine--tRNA ligase (Sodalis glossinidius (strain morsitans)).